We begin with the raw amino-acid sequence, 120 residues long: Large ribosomal subunit protein bL20 (120 aa).

Belongs to the bacterial ribosomal protein bL20 family.

Its function is as follows. Binds directly to 23S ribosomal RNA and is necessary for the in vitro assembly process of the 50S ribosomal subunit. It is not involved in the protein synthesizing functions of that subunit. This is Large ribosomal subunit protein bL20 from Desulforudis audaxviator (strain MP104C).